We begin with the raw amino-acid sequence, 229 residues long: Cytochrome b translational activator protein CBS1, mitochondrial (229 aa).

Residues methionine 1 to threonine 25 constitute a mitochondrion transit peptide.

It is found in the mitochondrion inner membrane. MRNA-specific translational activator of cytochrome b. The cytochrome b (COB) leader RNA may represent the target sequence for CBS1 and CBS2, tethering the COB mRNA to the inner mitochondrial membrane, where cotranslational insertion of cytochrome b into the membrane can occur. This chain is Cytochrome b translational activator protein CBS1, mitochondrial (CBS1), found in Saccharomyces cerevisiae (strain ATCC 204508 / S288c) (Baker's yeast).